The sequence spans 388 residues: Probable nitrate transporter NarT (388 aa).

12 consecutive transmembrane segments (helical) span residues Thr-14 to Ile-34, Ile-45 to Tyr-65, Ile-69 to Leu-89, Met-98 to Thr-118, Gly-139 to Trp-159, Ser-161 to Gly-181, Tyr-206 to Leu-226, Gly-242 to Ile-262, Phe-276 to Thr-296, Val-297 to Val-317, Gly-330 to Val-350, and Leu-359 to Ser-379.

Belongs to the major facilitator superfamily. Nitrate/nitrite porter (TC 2.A.1.8) family.

The protein resides in the cell membrane. Probably required for nitrate uptake under anoxic conditions. Also possibly involved in excretion of nitrite produced by the dissimilatory reduction of nitrate. In Staphylococcus carnosus (strain TM300), this protein is Probable nitrate transporter NarT (narT).